The primary structure comprises 223 residues: Ribosome maturation factor RimM (223 aa).

Low complexity predominate over residues 1-12 (MARRPGSSSRGP). 2 disordered regions span residues 1 to 44 (MARR…DPGL) and 204 to 223 (ADPP…DDPG). The PRC barrel domain occupies 136 to 210 (EDEFFLTDLI…KVVADPPDDL (75 aa)).

It belongs to the RimM family. As to quaternary structure, binds ribosomal protein uS19.

The protein localises to the cytoplasm. In terms of biological role, an accessory protein needed during the final step in the assembly of 30S ribosomal subunit, possibly for assembly of the head region. Essential for efficient processing of 16S rRNA. May be needed both before and after RbfA during the maturation of 16S rRNA. It has affinity for free ribosomal 30S subunits but not for 70S ribosomes. This is Ribosome maturation factor RimM from Methylorubrum extorquens (strain PA1) (Methylobacterium extorquens).